The chain runs to 172 residues: Shikimate kinase (172 aa).

Residue 17–22 (GTGKST) participates in ATP binding. Ser21 lines the Mg(2+) pocket. Substrate contacts are provided by Asp39, Arg63, and Gly84. Residue Arg122 coordinates ATP. Arg140 contacts substrate.

Belongs to the shikimate kinase family. Monomer. Mg(2+) is required as a cofactor.

Its subcellular location is the cytoplasm. The enzyme catalyses shikimate + ATP = 3-phosphoshikimate + ADP + H(+). It functions in the pathway metabolic intermediate biosynthesis; chorismate biosynthesis; chorismate from D-erythrose 4-phosphate and phosphoenolpyruvate: step 5/7. In terms of biological role, catalyzes the specific phosphorylation of the 3-hydroxyl group of shikimic acid using ATP as a cosubstrate. The polypeptide is Shikimate kinase (Staphylococcus haemolyticus (strain JCSC1435)).